Here is a 114-residue protein sequence, read N- to C-terminus: KPKEDKEWEKFKVKHITSQSVADFNCTSTMNNPDFTPDGQCKPINTFIHSNTGPVKEICRRASGRVNKSSTQQFPLTTCKNPKRCKYSQSNETNYICITCRDNYPVHFVKIGKC.

His-15 acts as the Proton acceptor in catalysis. N-linked (GlcNAc...) asparagine glycosylation is present at Asn-25. Disulfide bonds link Cys-26/Cys-79, Cys-41/Cys-85, Cys-59/Cys-100, and Cys-97/Cys-114. 42–46 (KPINT) contributes to the substrate binding site. N-linked (GlcNAc...) asparagine glycans are attached at residues Asn-67 and Asn-91. His-107 acts as the Proton donor in catalysis.

It belongs to the pancreatic ribonuclease family. In terms of assembly, monomer. Post-translationally, there are at least five different forms arising from glycan heterogeneity.

It localises to the secreted. Its function is as follows. Endonuclease, hydrolyzes highly polymerized RNA, poly(U) and poly(C), and the dinucleotides CpA and UpA. More active towards rCA than rUA or rUG. Has cytotoxic activity against cultured human submaxillary gland carcinoma cells. In Lithobates pipiens (Northern leopard frog), this protein is Amphinase-3.